Consider the following 833-residue polypeptide: Phosphatidylinositol-3-phosphatase myotubularin-2 (833 aa).

Residues G42–A109 form the GRAM domain. One can recognise a Myotubularin phosphatase domain in the interval T181–H647. Substrate contacts are provided by residues N329–K332, N354–I355, C440–R446, and R486. C440 functions as the Phosphocysteine intermediate in the catalytic mechanism. Positions Q503 to S530 are disordered. The span at S504–S530 shows a compositional bias: low complexity. A coiled-coil region spans residues E660 to A717. A disordered region spans residues K753–E772.

It belongs to the protein-tyrosine phosphatase family. Non-receptor class myotubularin subfamily. As to expression, mostly expressed in flowers and roots, and, to a lower extent, in siliques and leaves.

It localises to the cytoplasm. The enzyme catalyses a 1,2-diacyl-sn-glycero-3-phospho-(1D-myo-inositol-3-phosphate) + H2O = a 1,2-diacyl-sn-glycero-3-phospho-(1D-myo-inositol) + phosphate. It catalyses the reaction a 1,2-diacyl-sn-glycero-3-phospho-(1D-myo-inositol-3,5-bisphosphate) + H2O = a 1,2-diacyl-sn-glycero-3-phospho-(1D-myo-inositol-5-phosphate) + phosphate. Functionally, phosphatase with phosphoinositide 3'-phosphatase activity that can use phosphatidylinositol-3-phosphate (PtdIns3P) and phosphatidylinositol-3,5-diphosphate (PtdIns3,5P(2)) as substrates and produces phosphatidylinositol-5-phosphate (PtdIns5P); participates in pathway(s) that transfer gene regulatory signals to the nucleus. In Arabidopsis thaliana (Mouse-ear cress), this protein is Phosphatidylinositol-3-phosphatase myotubularin-2 (MTM2).